We begin with the raw amino-acid sequence, 1420 residues long: tRNA (32-2'-O)-methyltransferase regulator TRM732 (1420 aa).

The segment at R748–P754 is required for activity.

It belongs to the THADA family. As to quaternary structure, interacts with TRM7; for 2'-O-methylation of position 32 in substrate tRNAs.

The protein localises to the cytoplasm. Together with methyltransferase TRM7, methylates the 2'-O-ribose of nucleotides at position 32 of the anticodon loop of substrate tRNAs. This is tRNA (32-2'-O)-methyltransferase regulator TRM732 (TRM732) from Saccharomyces cerevisiae (strain ATCC 204508 / S288c) (Baker's yeast).